A 356-amino-acid chain; its full sequence is Malate dehydrogenase, glyoxysomal (356 aa).

The N-terminal 36 residues, 1 to 36, are a transit peptide targeting the glyoxysome; it reads MQPIPDVNQRIARISAHLHPPKSQMEESSALRRANC. NAD(+)-binding positions include 51 to 57 and Asp-77; that span reads GAAGGIG. Residues Arg-124 and Arg-130 each coordinate substrate. NAD(+) is bound by residues Asn-137 and 160–162; that span reads ISN. 2 residues coordinate substrate: Asn-162 and Arg-196. Residue His-220 is the Proton acceptor of the active site. Met-271 provides a ligand contact to NAD(+).

The protein belongs to the LDH/MDH superfamily. MDH type 1 family. In terms of assembly, homodimer.

Its subcellular location is the glyoxysome. It carries out the reaction (S)-malate + NAD(+) = oxaloacetate + NADH + H(+). The polypeptide is Malate dehydrogenase, glyoxysomal (Citrullus lanatus (Watermelon)).